We begin with the raw amino-acid sequence, 43 residues long: Snake venom metalloproteinase crotalin (43 aa).

Residues Leu1–Pro43 form the Peptidase M12B domain. Residue His13 participates in Zn(2+) binding.

Belongs to the venom metalloproteinase (M12B) family. P-I subfamily. Monomer. The cofactor is Zn(2+). In terms of processing, this protein autoproteolytically degrades to 10 kDa and 14 kDa fragments in the presence of SDS. Interestingly, the two fragments, as well as reduced crotalin are able to bind vWF, indicating that the binding activity does not require a specific protein conformation. As to expression, expressed by the venom gland.

The protein localises to the secreted. Its function is as follows. Snake venom zinc metalloproteinase that inhibits ristocin-induced platelet aggregation by abolishing the binding of von Willebrand factor (vWF) to platelet glycoprotein Ib alpha (GPIBA) through the cleavage of both GP1BA and vWF. Also has fibrinogenolytic activities by degrading the alpha- (FGA) and beta-chain (FGB) of fibrinogen. In vivo, induces a slight hemorrhage when applied to chick chorioallantoic membrane and has potent antithrombic effect. The chain is Snake venom metalloproteinase crotalin from Crotalus atrox (Western diamondback rattlesnake).